We begin with the raw amino-acid sequence, 273 residues long: Undecaprenyl-diphosphatase (273 aa).

7 consecutive transmembrane segments (helical) span residues 6–26 (SLLV…LPVS), 45–65 (AKTF…VMFW), 90–110 (LTLI…LLFH), 116–136 (LFNP…LIAA), 190–210 (YAAS…ATAL), 222–242 (GDIP…LVAI), and 252–272 (ISFI…YVVF).

This sequence belongs to the UppP family.

Its subcellular location is the cell inner membrane. The enzyme catalyses di-trans,octa-cis-undecaprenyl diphosphate + H2O = di-trans,octa-cis-undecaprenyl phosphate + phosphate + H(+). Functionally, catalyzes the dephosphorylation of undecaprenyl diphosphate (UPP). Confers resistance to bacitracin. This is Undecaprenyl-diphosphatase from Escherichia fergusonii (strain ATCC 35469 / DSM 13698 / CCUG 18766 / IAM 14443 / JCM 21226 / LMG 7866 / NBRC 102419 / NCTC 12128 / CDC 0568-73).